The chain runs to 579 residues: MMAEQVKCASPVAASGAGPGPVVNAELEVKKLQELVRKLEKQNEQLRSRAASAAAAPHLLLLQPPPPSAPPPAGACSPLATHRAPASTTSPGPGALGPAFPGTYCLPSPAPSLLCSLQPADAPFVYSKPAAGFFGGGGSPEPGTAGTPPGEAATPPLPPPTLLDEVEPLDLESLAAWSEEDDYTWLYVGSSKTFTSPEKSPSPLQWCRHVLDNPTPEMEAARRSLRFRLEQGYTSRGSPLSPQSSIDSELSTSELEDDSISMGYKLQDLTDVQIMARLQEESLRQDYASTSASVSRNSSSVSLSSGKKGTCSDQEYDRYSLEDEEEFDHLPPPQPRLPRCSPFQRGIPHSQTFSSIRDCRRSPSTQYFPSNNFQQPQYYPPQAQTADQQPNRTNGDKLRRSMPNLARMPSTAAASSNLSSPVTVRSSQSFDSSLHGAGSGVSRVPSCIPSPGQIQHRVHSVGHFPVPIRQPLKATAYVSPTVQGSSSSGSSGSSGGSGSGMPLSNGTQLYSTTGIPTPNKAAASGILGRSALPRPSLAINGSNLPRSKIAQPVRSFLQPPKPLSSLSTLRDGNWRDGCY.

Disordered regions lie at residues 1-21, 60-95, 135-162, 233-258, 289-313, and 347-454; these read MMAE…GPGP, LLLQ…GPGA, GGGG…PPTL, YTSR…LEDD, STSA…TCSD, and IPHS…PGQI. Residues 9 to 21 are compositionally biased toward low complexity; the sequence is ASPVAASGAGPGP. The stretch at 21–56 forms a coiled coil; it reads PVVNAELEVKKLQELVRKLEKQNEQLRSRAASAAAA. Residues 63-73 show a composition bias toward pro residues; it reads QPPPPSAPPPA. A compositionally biased stretch (low complexity) spans 141-154; sequence EPGTAGTPPGEAAT. A compositionally biased stretch (polar residues) spans 233–243; the sequence is YTSRGSPLSPQ. Ser241 is modified (phosphoserine). 2 stretches are compositionally biased toward low complexity: residues 244-253 and 289-305; these read SSIDSELSTS and STSA…SLSS. Over residues 362–373 the composition is skewed to polar residues; sequence SPSTQYFPSNNF. Over residues 374–390 the composition is skewed to low complexity; that stretch reads QQPQYYPPQAQTADQQP. The span at 412 to 432 shows a compositional bias: polar residues; sequence AAASSNLSSPVTVRSSQSFDS. Position 469 is an asymmetric dimethylarginine (Arg469). Residues 479 to 516 form a disordered region; sequence SPTVQGSSSSGSSGSSGGSGSGMPLSNGTQLYSTTGIP. The span at 502 to 516 shows a compositional bias: polar residues; it reads PLSNGTQLYSTTGIP. An Asymmetric dimethylarginine modification is found at Arg554.

Belongs to the SLAIN motif-containing family. In terms of assembly, interacts with MAPRE1, MAPRE2, MAPRE3 and CKAP5. Interacts with ZDHHC17 (via ANK repeats). Expressed in embryonic stem cells. Expressed in adult bone marrow, brain, kidney, lung, testis and thymus. Expressed in colon. Isoform 1 is highly expressed in brain. Isoform 2 is more widely expressed in bone marrow, brain, colon, kidney, lung and thymus.

The protein resides in the cytoplasm. It localises to the cytoskeleton. In terms of biological role, microtubule plus-end tracking protein that might be involved in the regulation of cytoplasmic microtubule dynamics, microtubule organization and microtubule elongation. The protein is SLAIN motif-containing protein 1 (Slain1) of Mus musculus (Mouse).